We begin with the raw amino-acid sequence, 131 residues long: Glycine cleavage system H protein (131 aa).

The region spanning 24 to 106 (RAIVGVSDHA…YGEGWIMVIE (83 aa)) is the Lipoyl-binding domain. At Lys65 the chain carries N6-lipoyllysine.

It belongs to the GcvH family. The glycine cleavage system is composed of four proteins: P, T, L and H. Requires (R)-lipoate as cofactor.

Functionally, the glycine cleavage system catalyzes the degradation of glycine. The H protein shuttles the methylamine group of glycine from the P protein to the T protein. The chain is Glycine cleavage system H protein from Xylella fastidiosa (strain Temecula1 / ATCC 700964).